We begin with the raw amino-acid sequence, 432 residues long: Probable pectate lyase 22 (432 aa).

A signal peptide spans 1–45 (MFRPNSLLIPSNLSTTKSQRNTMLNSSYLSFALIFFCCILFSALA). Residue N65 is glycosylated (N-linked (GlcNAc...) asparagine). D228, D252, and D256 together coordinate Ca(2+). R308 is an active-site residue.

Belongs to the polysaccharide lyase 1 family. It depends on Ca(2+) as a cofactor.

The enzyme catalyses Eliminative cleavage of (1-&gt;4)-alpha-D-galacturonan to give oligosaccharides with 4-deoxy-alpha-D-galact-4-enuronosyl groups at their non-reducing ends.. It participates in glycan metabolism; pectin degradation; 2-dehydro-3-deoxy-D-gluconate from pectin: step 2/5. The polypeptide is Probable pectate lyase 22 (Arabidopsis thaliana (Mouse-ear cress)).